Here is a 316-residue protein sequence, read N- to C-terminus: CD276 antigen (316 aa).

Residues 1–28 (MLRGWGGPSVGVSMGTALGVLCLCLTGA) form the signal peptide. The Ig-like V-type domain maps to 29–139 (VEVQVSEDPV…DSAAVSLQVA (111 aa)). The Extracellular portion of the chain corresponds to 29-248 (VEVQVSEDPV…GQPMTFPPEA (220 aa)). N-linked (GlcNAc...) asparagine glycosylation is found at N104, N189, and N215. The Ig-like C2-type domain occupies 145–238 (PSMTLEPNKD…QDAHGSVTIT (94 aa)). C165 and C220 are oxidised to a cystine. The helical transmembrane segment at 249 to 269 (LWVTVGLSVCLVILLVALAFV) threads the bilayer. The Cytoplasmic segment spans residues 270–316 (CWRKIKQSCEEENAGAEDQDGDGEGSKTALRPLKHSENKEDDGQEIA). A compositionally biased stretch (acidic residues) spans 281-292 (ENAGAEDQDGDG). Residues 281–316 (ENAGAEDQDGDGEGSKTALRPLKHSENKEDDGQEIA) are disordered.

It belongs to the immunoglobulin superfamily. BTN/MOG family. As to quaternary structure, interacts with TREML2 and this interaction enhances T-cell activation.

The protein resides in the membrane. Its function is as follows. Modulates T-cell-mediated immune responses and the development of acute and chronic transplant rejection. May play a positive regulatory role in bone formation and has a dual role in the bone-immune interface. Induces antitumor immunity as it activates both acquired and innate immunity leading to natural killer cell and CD8 T-cell dependent killing of tumor cells. This chain is CD276 antigen (Cd276), found in Rattus norvegicus (Rat).